Consider the following 21-residue polypeptide: MKVKVDADACIGCGVCVELCP.

In terms of domain architecture, 4Fe-4S ferredoxin-type spans 2–21 (KVKVDADACIGCGVCVELCP). The [4Fe-4S] cluster site is built by C10, C13, and C16.

Monomer. [4Fe-4S] cluster is required as a cofactor.

Its function is as follows. Ferredoxins are iron-sulfur proteins that transfer electrons in a wide variety of metabolic reactions. The polypeptide is Ferredoxin (fdxA) (Pyrococcus woesei).